The sequence spans 289 residues: Protoheme IX farnesyltransferase 2 (289 aa).

9 helical membrane-spanning segments follow: residues 4 to 24 (PGII…AAKG), 28 to 48 (LVLM…GCAI), 66 to 86 (RVTV…LALG), 99 to 118 (ALAL…VYSL), 124 to 144 (SVYG…VGYC), 155 to 175 (AILL…IAIF), 199 to 219 (LHIV…PLAG), 221 to 241 (TGIA…AMAL), and 256 to 276 (QVFG…ALDF).

Belongs to the UbiA prenyltransferase family. Protoheme IX farnesyltransferase subfamily.

It localises to the cell inner membrane. The catalysed reaction is heme b + (2E,6E)-farnesyl diphosphate + H2O = Fe(II)-heme o + diphosphate. It functions in the pathway porphyrin-containing compound metabolism; heme O biosynthesis; heme O from protoheme: step 1/1. Functionally, converts heme B (protoheme IX) to heme O by substitution of the vinyl group on carbon 2 of heme B porphyrin ring with a hydroxyethyl farnesyl side group. This is Protoheme IX farnesyltransferase 2 from Shewanella baltica (strain OS195).